The chain runs to 370 residues: G-protein coupled receptor homolog K2 (370 aa).

Topologically, residues 1-61 (MTSPTNSTML…CTFLEDTKYH (61 aa)) are extracellular. Residues Asn6 and Asn51 are each glycosylated (N-linked (GlcNAc...) asparagine; by host). A helical membrane pass occupies residues 62 to 82 (IIVIHIILFLLGSIGNIFVVS). Over 83–94 (LIAFKRNKSITD) the chain is Cytoplasmic. Residues 95–115 (IYILNLSMSDCIFVFQIPFIV) form a helical membrane-spanning segment. The Extracellular portion of the chain corresponds to 116–131 (YSKLDQWIFGNILCKI). Residues 132–152 (MSVLYYVGFFSNMFIITLMSI) traverse the membrane as a helical segment. Residues 153–171 (DRYFAIVHPIKRQPYRTKR) lie on the Cytoplasmic side of the membrane. A helical membrane pass occupies residues 172–192 (IGILMCCSAWLLSLILSSPVS). The Extracellular segment spans residues 193-223 (KLYENIPHMSKDIYQCTLTNENDSIIAFIKR). A helical membrane pass occupies residues 224–244 (LMQIEITILGFLIPIIIFVYC). Residues 245–265 (YYRIFTTVVRLRNRRKYKSIK) are Cytoplasmic-facing. A helical transmembrane segment spans residues 266–286 (IVLMIVVCSLICWIPLYIVLM). Residues 287–300 (IATIVSLYTSNIFR) are Extracellular-facing. A helical transmembrane segment spans residues 301–321 (HLCLYLNLAYAITFSETISLA). Residues 322–370 (RCCINPIIYTLIGEHVRSRISSICSCIYRDNRIRKKLFSRKSSSSSNII) lie on the Cytoplasmic side of the membrane.

This sequence belongs to the G-protein coupled receptor 1 family.

The protein localises to the host cell membrane. Its function is as follows. Putative chemokine receptor. The chain is G-protein coupled receptor homolog K2 from Sus scrofa (Pig).